Consider the following 342-residue polypeptide: Dysbindin (342 aa).

Position 11 is a phosphoserine (serine 11). The stretch at 83–180 (LSAHWEKKQA…AELDAEHSQK (98 aa)) forms a coiled coil. Positions 243–256 (LMDISDQEALDVFL) match the Nuclear export signal motif. The segment at 263–342 (NTLLSPISGP…ATLHSDDSDS (80 aa)) is disordered. The span at 286–305 (PTPSQAPATPPSSSSPGTDP) shows a compositional bias: low complexity. A phosphoserine mark is found at serine 316, serine 321, and serine 340.

The protein belongs to the dysbindin family. As to quaternary structure, interacts (via its coiled coil domain) with KXD1. Interacts with CMYA5, PI4K2 and RNF151. Component of the biogenesis of lysosome-related organelles complex 1 (BLOC-1) composed of at least BLOC1S1, BLOC1S2, BLOC1S3, BLOC1S4, BLOC1S5, BLOC1S6, DTNBP1/BLOC1S7 and SNAPIN/BLOC1S8. Interacts directly in the complex with BLOC1S5, BLOC1S6 and SNAPIN/BLOC1S8. The BLOC-1 complex associates with the AP-3 protein complex and membrane protein cargos. This BLOC-1 complex also associates with the BLOC-2 complex in endosomes. Binds to DTNA and DTNB but may not be a physiological binding partner. Interacts with the DNA-dependent protein kinase complex DNA-PK; the interaction phosphorylates DTNBP1 in vitro. Interacts directly in this complex with XRCC5 and XRCC6. Interacts with AP3M1, AP3B2 and TRIM32. Interacts with XPO1; the interaction exports DTNBP1 out of the nucleus. Ubiquitinated by TRIM32. Ubiquitination leads to DTNBP1 degradation.

Its subcellular location is the cytoplasm. It localises to the cytoplasmic vesicle membrane. It is found in the cytoplasmic vesicle. The protein resides in the secretory vesicle. The protein localises to the synaptic vesicle membrane. Its subcellular location is the endosome membrane. It localises to the melanosome membrane. It is found in the nucleus. The protein resides in the postsynaptic density. The protein localises to the presynaptic cell membrane. Its subcellular location is the endoplasmic reticulum. Its function is as follows. Component of the BLOC-1 complex, a complex that is required for normal biogenesis of lysosome-related organelles (LRO), such as platelet dense granules and melanosomes. In concert with the AP-3 complex, the BLOC-1 complex is required to target membrane protein cargos into vesicles assembled at cell bodies for delivery into neurites and nerve terminals. The BLOC-1 complex, in association with SNARE proteins, is also proposed to be involved in neurite extension. Associates with the BLOC-2 complex to facilitate the transport of TYRP1 independent of AP-3 function. Plays a role in synaptic vesicle trafficking and in neurotransmitter release. Plays a role in the regulation of cell surface exposure of DRD2. May play a role in actin cytoskeleton reorganization and neurite outgrowth. May modulate MAPK8 phosphorylation. Appears to promote neuronal transmission and viability through regulating the expression of SNAP25 and SYN1, modulating PI3-kinase-Akt signaling and influencing glutamatergic release. Regulates the expression of SYN1 through binding to its promoter. Modulates prefrontal cortical activity via the dopamine/D2 pathway. This is Dysbindin (DTNBP1) from Bos taurus (Bovine).